The following is a 79-amino-acid chain: Acyl carrier protein (79 aa).

One can recognise a Carrier domain in the interval 1-79; it reads MTKEQILVDV…DVVSYIETQV (79 aa). Position 39 is an O-(pantetheine 4'-phosphoryl)serine (serine 39).

The protein belongs to the acyl carrier protein (ACP) family. 4'-phosphopantetheine is transferred from CoA to a specific serine of apo-ACP by AcpS. This modification is essential for activity because fatty acids are bound in thioester linkage to the sulfhydryl of the prosthetic group.

The protein localises to the cytoplasm. It functions in the pathway lipid metabolism; fatty acid biosynthesis. Carrier of the growing fatty acid chain in fatty acid biosynthesis. This Exiguobacterium sibiricum (strain DSM 17290 / CCUG 55495 / CIP 109462 / JCM 13490 / 255-15) protein is Acyl carrier protein.